The following is a 290-amino-acid chain: Ribosomal protein L11 methyltransferase (290 aa).

Residues threonine 135, glycine 158, aspartate 180, and asparagine 227 each coordinate S-adenosyl-L-methionine.

Belongs to the methyltransferase superfamily. PrmA family.

It is found in the cytoplasm. The catalysed reaction is L-lysyl-[protein] + 3 S-adenosyl-L-methionine = N(6),N(6),N(6)-trimethyl-L-lysyl-[protein] + 3 S-adenosyl-L-homocysteine + 3 H(+). In terms of biological role, methylates ribosomal protein L11. The sequence is that of Ribosomal protein L11 methyltransferase from Mesorhizobium japonicum (strain LMG 29417 / CECT 9101 / MAFF 303099) (Mesorhizobium loti (strain MAFF 303099)).